Reading from the N-terminus, the 501-residue chain is Dipeptide and tripeptide permease A (501 aa).

The Cytoplasmic portion of the chain corresponds to 1 to 21; it reads MSTANKKPTESVSLNAFKQPK. The chain crosses the membrane as a helical span at residues 22-44; sequence AFYLIFSIELWERFGYYGLQGIM. The Periplasmic portion of the chain corresponds to 45–59; that stretch reads AVYLVKQLGMSEADS. Residues 60 to 80 traverse the membrane as a helical segment; sequence ITLFSSFSALVYGLVAIGGWL. Over 81 to 89 the chain is Cytoplasmic; sequence GDKILGTKR. A helical transmembrane segment spans residues 90-110; sequence VIMLGAVVLAIGYALVAWSGH. A topological domain (periplasmic) is located at residue Asp-111. Residues 112 to 132 form a helical membrane-spanning segment; the sequence is AGIVYMGMAAIAVGNGLFKAN. Topologically, residues 133–153 are cytoplasmic; the sequence is PSSLLSTCYAKDDPRLDGAFT. Residues 154 to 174 traverse the membrane as a helical segment; the sequence is MYYMSVNIGSFFSMLATPWLA. Residues 175 to 178 are Periplasmic-facing; it reads ARYG. A helical transmembrane segment spans residues 179-199; sequence WSTAFALSVVGMLITVVNFAF. Over 200 to 219 the chain is Cytoplasmic; sequence CQRWVKSYGSKPDFEPINFR. The helical transmembrane segment at 220 to 240 threads the bilayer; it reads NLLLTIVGIVVLIAVATWLLH. Residues 241 to 246 lie on the Periplasmic side of the membrane; it reads NQDIAR. A helical membrane pass occupies residues 247–267; sequence MVLGVIALGIVIIFGKEAFSM. The Cytoplasmic portion of the chain corresponds to 268-274; that stretch reads HGAARRK. Residues 275–295 traverse the membrane as a helical segment; the sequence is MIVAFILMLQAIIFFVLYSQM. At 296-320 the chain is on the periplasmic side; sequence PTSLNFFAIRNVEHSILGIAFEPEQ. A helical transmembrane segment spans residues 321 to 341; sequence YQALNPFWIITGSPILAAIYN. Topologically, residues 342–352 are cytoplasmic; sequence RMGDTLPMPMK. Residues 353-373 traverse the membrane as a helical segment; it reads FAIGMVLCSGAFLILPLGAKF. The Periplasmic portion of the chain corresponds to 374-383; that stretch reads ANDAGIVSVN. Residues 384–404 form a helical membrane-spanning segment; the sequence is WLIASYGLQSIGELMISGLGL. The Cytoplasmic segment spans residues 405 to 414; it reads AMVAQLVPQR. A helical membrane pass occupies residues 415 to 435; that stretch reads LMGFIMGSWFLTTAGANIIGG. Residues 436–459 are Periplasmic-facing; sequence YVANLMAVPSDVTDPLMSLEVYGR. A helical membrane pass occupies residues 460 to 480; sequence VFMQIGIATAVIAVLMLLTAP. The Cytoplasmic segment spans residues 481 to 501; sequence KLNRMTQDDDTAEKGSKAATV.

It belongs to the major facilitator superfamily. Proton-dependent oligopeptide transporter (POT/PTR) (TC 2.A.17) family. DtpA subfamily.

Its subcellular location is the cell inner membrane. Functionally, proton-dependent permease that transports di- and tripeptides. This chain is Dipeptide and tripeptide permease A, found in Salmonella typhi.